The primary structure comprises 311 residues: 4-hydroxy-3-methylbut-2-enyl diphosphate reductase (311 aa).

Cysteine 12 contributes to the [4Fe-4S] cluster binding site. 2 residues coordinate (2E)-4-hydroxy-3-methylbut-2-enyl diphosphate: histidine 41 and histidine 74. Residues histidine 41 and histidine 74 each contribute to the dimethylallyl diphosphate site. Histidine 41 and histidine 74 together coordinate isopentenyl diphosphate. Residue cysteine 96 coordinates [4Fe-4S] cluster. Histidine 124 provides a ligand contact to (2E)-4-hydroxy-3-methylbut-2-enyl diphosphate. Histidine 124 contacts dimethylallyl diphosphate. Residue histidine 124 participates in isopentenyl diphosphate binding. Glutamate 126 (proton donor) is an active-site residue. Position 167 (threonine 167) interacts with (2E)-4-hydroxy-3-methylbut-2-enyl diphosphate. A [4Fe-4S] cluster-binding site is contributed by cysteine 197. Residues serine 225, serine 226, asparagine 227, and serine 269 each contribute to the (2E)-4-hydroxy-3-methylbut-2-enyl diphosphate site. 4 residues coordinate dimethylallyl diphosphate: serine 225, serine 226, asparagine 227, and serine 269. The isopentenyl diphosphate site is built by serine 225, serine 226, asparagine 227, and serine 269.

The protein belongs to the IspH family. Requires [4Fe-4S] cluster as cofactor.

The enzyme catalyses isopentenyl diphosphate + 2 oxidized [2Fe-2S]-[ferredoxin] + H2O = (2E)-4-hydroxy-3-methylbut-2-enyl diphosphate + 2 reduced [2Fe-2S]-[ferredoxin] + 2 H(+). The catalysed reaction is dimethylallyl diphosphate + 2 oxidized [2Fe-2S]-[ferredoxin] + H2O = (2E)-4-hydroxy-3-methylbut-2-enyl diphosphate + 2 reduced [2Fe-2S]-[ferredoxin] + 2 H(+). The protein operates within isoprenoid biosynthesis; dimethylallyl diphosphate biosynthesis; dimethylallyl diphosphate from (2E)-4-hydroxy-3-methylbutenyl diphosphate: step 1/1. It functions in the pathway isoprenoid biosynthesis; isopentenyl diphosphate biosynthesis via DXP pathway; isopentenyl diphosphate from 1-deoxy-D-xylulose 5-phosphate: step 6/6. Its function is as follows. Catalyzes the conversion of 1-hydroxy-2-methyl-2-(E)-butenyl 4-diphosphate (HMBPP) into a mixture of isopentenyl diphosphate (IPP) and dimethylallyl diphosphate (DMAPP). Acts in the terminal step of the DOXP/MEP pathway for isoprenoid precursor biosynthesis. In Aeromonas hydrophila subsp. hydrophila (strain ATCC 7966 / DSM 30187 / BCRC 13018 / CCUG 14551 / JCM 1027 / KCTC 2358 / NCIMB 9240 / NCTC 8049), this protein is 4-hydroxy-3-methylbut-2-enyl diphosphate reductase.